Reading from the N-terminus, the 315-residue chain is MFSPNHTIVTEFILLGLTDDPVLEKILFGVFLAIYLITLAGNLCMILLIRTNSHLQTPMYFFLGHLSFVDICYSSNVTPNMLHNFLSEQKTISYAGCFTQCLLFIALVITEFYILASMALDRYVAICSPLHYSSRMSKNICVCLVTIPYMYGFLSGFSQSLLTFHLSFCGSLEINHFYCADPPLIMLACSDTRVKKMAMFVVAGFNLSSSLFIILLSYLFIFAAIFRIRSAEGRHKAFSTCASHLTIVTLFYGTLFCMYVRPPSEKSVEESKITAVFYTFLSPMLNPLIYSLRNTDVILAMQQMIRGKSFHKIAV.

Topologically, residues 1-25 (MFSPNHTIVTEFILLGLTDDPVLEK) are extracellular. N-linked (GlcNAc...) asparagine glycosylation is present at Asn5. The chain crosses the membrane as a helical span at residues 26 to 46 (ILFGVFLAIYLITLAGNLCMI). The Cytoplasmic segment spans residues 47–54 (LLIRTNSH). A helical transmembrane segment spans residues 55-75 (LQTPMYFFLGHLSFVDICYSS). Residues 76–99 (NVTPNMLHNFLSEQKTISYAGCFT) are Extracellular-facing. An intrachain disulfide couples Cys97 to Cys189. The chain crosses the membrane as a helical span at residues 100-120 (QCLLFIALVITEFYILASMAL). At 121–139 (DRYVAICSPLHYSSRMSKN) the chain is on the cytoplasmic side. The helical transmembrane segment at 140–160 (ICVCLVTIPYMYGFLSGFSQS) threads the bilayer. The Extracellular portion of the chain corresponds to 161–196 (LLTFHLSFCGSLEINHFYCADPPLIMLACSDTRVKK). A helical transmembrane segment spans residues 197 to 217 (MAMFVVAGFNLSSSLFIILLS). Residues 218–237 (YLFIFAAIFRIRSAEGRHKA) are Cytoplasmic-facing. Residues 238-258 (FSTCASHLTIVTLFYGTLFCM) form a helical membrane-spanning segment. The Extracellular portion of the chain corresponds to 259–271 (YVRPPSEKSVEES). A helical transmembrane segment spans residues 272–292 (KITAVFYTFLSPMLNPLIYSL). The Cytoplasmic segment spans residues 293 to 315 (RNTDVILAMQQMIRGKSFHKIAV).

This sequence belongs to the G-protein coupled receptor 1 family.

The protein resides in the cell membrane. Functionally, odorant receptor. The protein is Olfactory receptor 5M1 (OR5M1) of Homo sapiens (Human).